A 587-amino-acid polypeptide reads, in one-letter code: Probable pectinesterase/pectinesterase inhibitor 61 (587 aa).

The tract at residues 1-23 (MGYDRLGPSGPSNPNQKDPATSL) is disordered. Residues 10–19 (GPSNPNQKDP) are compositionally biased toward polar residues. The helical transmembrane segment at 35 to 55 (ILFTLAVLVVGVVCFGIFAGI) threads the bilayer. Residues 69–223 (RKPTQAISRT…SEMVSNCLAI (155 aa)) form a pectinesterase inhibitor 61 region. Positions 273-571 (DITVSKDGSG…FTVAQFISGS (299 aa)) are pectinesterase 61. Positions 349 and 379 each coordinate substrate. Asp-402 acts as the Proton donor; for pectinesterase activity in catalysis. Cysteines 416 and 436 form a disulfide. Asp-423 serves as the catalytic Nucleophile; for pectinesterase activity. Positions 491 and 493 each coordinate substrate.

This sequence in the N-terminal section; belongs to the PMEI family. The protein in the C-terminal section; belongs to the pectinesterase family. Expressed in siliques, floral stems and rosettes leaves.

The protein localises to the membrane. The catalysed reaction is [(1-&gt;4)-alpha-D-galacturonosyl methyl ester](n) + n H2O = [(1-&gt;4)-alpha-D-galacturonosyl](n) + n methanol + n H(+). It functions in the pathway glycan metabolism; pectin degradation; 2-dehydro-3-deoxy-D-gluconate from pectin: step 1/5. In terms of biological role, acts in the modification of cell walls via demethylesterification of cell wall pectin. This is Probable pectinesterase/pectinesterase inhibitor 61 (PME61) from Arabidopsis thaliana (Mouse-ear cress).